Reading from the N-terminus, the 257-residue chain is Large ribosomal subunit protein uL2 (257 aa).

The interval 207–231 (VEHPFGGGNHQHIGKPSTIRRDAPA) is disordered.

The protein belongs to the universal ribosomal protein uL2 family. As to quaternary structure, component of the large ribosomal subunit.

The protein localises to the cytoplasm. Its function is as follows. Component of the large ribosomal subunit. The ribosome is a large ribonucleoprotein complex responsible for the synthesis of proteins in the cell. The sequence is that of Large ribosomal subunit protein uL2 (rpl8) from Xenopus laevis (African clawed frog).